The primary structure comprises 94 residues: Co-chaperonin GroES (94 aa).

This sequence belongs to the GroES chaperonin family. In terms of assembly, heptamer of 7 subunits arranged in a ring. Interacts with the chaperonin GroEL.

The protein resides in the cytoplasm. Together with the chaperonin GroEL, plays an essential role in assisting protein folding. The GroEL-GroES system forms a nano-cage that allows encapsulation of the non-native substrate proteins and provides a physical environment optimized to promote and accelerate protein folding. GroES binds to the apical surface of the GroEL ring, thereby capping the opening of the GroEL channel. The polypeptide is Co-chaperonin GroES (Listeria welshimeri serovar 6b (strain ATCC 35897 / DSM 20650 / CCUG 15529 / CIP 8149 / NCTC 11857 / SLCC 5334 / V8)).